Consider the following 239-residue polypeptide: 2,3,4,5-tetrahydropyridine-2,6-dicarboxylate N-acetyltransferase (239 aa).

It belongs to the transferase hexapeptide repeat family. DapH subfamily.

The catalysed reaction is (S)-2,3,4,5-tetrahydrodipicolinate + acetyl-CoA + H2O = L-2-acetamido-6-oxoheptanedioate + CoA. The protein operates within amino-acid biosynthesis; L-lysine biosynthesis via DAP pathway; LL-2,6-diaminopimelate from (S)-tetrahydrodipicolinate (acetylase route): step 1/3. Functionally, catalyzes the transfer of an acetyl group from acetyl-CoA to tetrahydrodipicolinate. In Staphylococcus aureus (strain MRSA252), this protein is 2,3,4,5-tetrahydropyridine-2,6-dicarboxylate N-acetyltransferase.